Consider the following 508-residue polypeptide: 3-octaprenyl-4-hydroxybenzoate carboxy-lyase (508 aa).

Asparagine 172 contributes to the Mn(2+) binding site. Prenylated FMN is bound by residues isoleucine 175–arginine 177, arginine 189–leucine 191, and arginine 194–glycine 195. Residue glutamate 238 coordinates Mn(2+). The active-site Proton donor is aspartate 287. The tract at residues glycine 483 to valine 508 is disordered. Basic and acidic residues predominate over residues proline 498 to valine 508.

The protein belongs to the UbiD family. Homohexamer. Requires prenylated FMN as cofactor. Mn(2+) is required as a cofactor.

Its subcellular location is the cell membrane. The catalysed reaction is a 4-hydroxy-3-(all-trans-polyprenyl)benzoate + H(+) = a 2-(all-trans-polyprenyl)phenol + CO2. It functions in the pathway cofactor biosynthesis; ubiquinone biosynthesis. Functionally, catalyzes the decarboxylation of 3-octaprenyl-4-hydroxy benzoate to 2-octaprenylphenol, an intermediate step in ubiquinone biosynthesis. The sequence is that of 3-octaprenyl-4-hydroxybenzoate carboxy-lyase from Chromohalobacter salexigens (strain ATCC BAA-138 / DSM 3043 / CIP 106854 / NCIMB 13768 / 1H11).